A 414-amino-acid chain; its full sequence is Esterase FrsA (414 aa).

It belongs to the FrsA family.

It catalyses the reaction a carboxylic ester + H2O = an alcohol + a carboxylate + H(+). Catalyzes the hydrolysis of esters. The sequence is that of Esterase FrsA from Shigella boydii serotype 4 (strain Sb227).